A 665-amino-acid chain; its full sequence is Methionine--tRNA ligase (665 aa).

The short motif at 12–22 (YYPSGKLHIGS) is the 'HIGH' region element. The 'KMSKS' region signature appears at 308 to 312 (KMSKS). Position 311 (K311) interacts with ATP. The tRNA-binding domain occupies 562-665 (TFDAVEIRVA…SSVPNGSIIG (104 aa)).

It belongs to the class-I aminoacyl-tRNA synthetase family. MetG type 2B subfamily. In terms of assembly, homodimer.

It is found in the cytoplasm. The enzyme catalyses tRNA(Met) + L-methionine + ATP = L-methionyl-tRNA(Met) + AMP + diphosphate. Its function is as follows. Is required not only for elongation of protein synthesis but also for the initiation of all mRNA translation through initiator tRNA(fMet) aminoacylation. This chain is Methionine--tRNA ligase (metG), found in Streptococcus pyogenes serotype M18 (strain MGAS8232).